Consider the following 773-residue polypeptide: Preaspterpenacid I synthase sttA (773 aa).

A sesterterpenoid synthase region spans residues 4-359 (ISDVMKHCVP…RYHRTDLATT (356 aa)). Residue Asp105 participates in Mg(2+) binding. Asp105 contacts substrate. Residues 211-214 (RVNE) form a substrate region. Asn255 contacts substrate. Substrate regions lie at residues 259-263 (SFPKE) and 350-351 (RY). The tract at residues 360-769 (AEDRATLIGK…RMMLLGMGPK (410 aa)) is geranylfarnesyl diphosphate synthase. A disordered region spans residues 423-447 (AFKKRNSRNGKQNGTEGSKSTFTNG). Positions 431–447 (NGKQNGTEGSKSTFTNG) are enriched in polar residues. Isopentenyl diphosphate-binding residues include Lys493, Arg496, and His525. Mg(2+) is bound by residues Asp532 and Asp536. Arg541 provides a ligand contact to dimethylallyl diphosphate. Arg542 serves as a coordination point for isopentenyl diphosphate. Positions 614, 615, 652, 659, and 669 each coordinate dimethylallyl diphosphate.

It in the N-terminal section; belongs to the terpene synthase family. This sequence in the C-terminal section; belongs to the FPP/GGPP synthase family.

It carries out the reaction 4 isopentenyl diphosphate + dimethylallyl diphosphate = (2E,6E,10E,14E)-geranylfarnesyl diphosphate + 4 diphosphate. The enzyme catalyses (2E,6E,10E,14E)-geranylfarnesyl diphosphate + H2O = preaspterpenacid acid I + diphosphate. It functions in the pathway secondary metabolite biosynthesis; terpenoid biosynthesis. Sesterterpenoid synthase; part of the gene cluster that mediates the biosynthesis of aspterpenacids. Performs both prenyl transferase and terpene cyclase activity, converting isopentenyl diphosphate and dimethylallyl diphosphate into geranylfarnesyl diphosphate (GFPP) and then converting GFPP into preaspterpenacid I. C22-oxidative modification of preaspterpenacid I by the cytochrome P450 monooxygenase sttB then leads to preaspterpenacid II. It has still to be determined how preaspterpenacid II is further modified to produce aspterpenacids. This Aspergillus terreus (strain NIH 2624 / FGSC A1156) protein is Preaspterpenacid I synthase sttA.